The chain runs to 289 residues: ATP synthase subunit gamma, mitochondrial (289 aa).

It belongs to the ATPase gamma chain family. In terms of assembly, F-type ATPases have 2 components, CF(1) - the catalytic core - and CF(0) - the membrane proton channel. CF(1) has five subunits: alpha(3), beta(3), gamma(1), delta(1), epsilon(1). CF(0) has three main subunits: a, b and c.

The protein localises to the mitochondrion. The protein resides in the mitochondrion inner membrane. In terms of biological role, mitochondrial membrane ATP synthase (F(1)F(0) ATP synthase or Complex V) produces ATP from ADP in the presence of a proton gradient across the membrane which is generated by electron transport complexes of the respiratory chain. F-type ATPases consist of two structural domains, F(1) - containing the extramembraneous catalytic core, and F(0) - containing the membrane proton channel, linked together by a central stalk and a peripheral stalk. During catalysis, ATP synthesis in the catalytic domain of F(1) is coupled via a rotary mechanism of the central stalk subunits to proton translocation. Part of the complex F(1) domain and the central stalk which is part of the complex rotary element. The gamma subunit protrudes into the catalytic domain formed of alpha(3)beta(3). Rotation of the central stalk against the surrounding alpha(3)beta(3) subunits leads to hydrolysis of ATP in three separate catalytic sites on the beta subunits. The protein is ATP synthase subunit gamma, mitochondrial (ATP3) of Kluyveromyces lactis (strain ATCC 8585 / CBS 2359 / DSM 70799 / NBRC 1267 / NRRL Y-1140 / WM37) (Yeast).